Here is a 375-residue protein sequence, read N- to C-terminus: Aminomethyltransferase (375 aa).

This sequence belongs to the GcvT family. In terms of assembly, the glycine cleavage system is composed of four proteins: P, T, L and H.

It catalyses the reaction N(6)-[(R)-S(8)-aminomethyldihydrolipoyl]-L-lysyl-[protein] + (6S)-5,6,7,8-tetrahydrofolate = N(6)-[(R)-dihydrolipoyl]-L-lysyl-[protein] + (6R)-5,10-methylene-5,6,7,8-tetrahydrofolate + NH4(+). Its function is as follows. The glycine cleavage system catalyzes the degradation of glycine. In Cupriavidus pinatubonensis (strain JMP 134 / LMG 1197) (Cupriavidus necator (strain JMP 134)), this protein is Aminomethyltransferase.